Reading from the N-terminus, the 358-residue chain is Mesaconyl-CoA hydratase (358 aa).

Belongs to the enoyl-CoA hydratase/isomerase family. In terms of assembly, homodimer.

The catalysed reaction is (2R,3S)-beta-methylmalyl-CoA = 2-methylfumaryl-CoA + H2O. Shows highest activity at 0.5 M KCl. Does not require divalent ions for activity. Functionally, involved in the methylaspartate cycle. Catalyzes the reversible hydration of mesaconyl-CoA (2-methylfumaryl-CoA) to yield beta-methylmalyl-CoA ((2R,3S)-beta-methylmalyl-CoA). Also shows activity with mesaconyl-C4-CoA (3-methylfumaryl-CoA), (S)-citramalyl-CoA and (S)-malyl-CoA. This Haloarcula hispanica (strain ATCC 33960 / DSM 4426 / JCM 8911 / NBRC 102182 / NCIMB 2187 / VKM B-1755) protein is Mesaconyl-CoA hydratase.